A 162-amino-acid polypeptide reads, in one-letter code: Nucleotide-binding protein CMM_2802 (162 aa).

It belongs to the YajQ family.

Functionally, nucleotide-binding protein. This is Nucleotide-binding protein CMM_2802 from Clavibacter michiganensis subsp. michiganensis (strain NCPPB 382).